We begin with the raw amino-acid sequence, 377 residues long: Spermidine/putrescine import ATP-binding protein PotA (377 aa).

Residues I18 to I248 form the ABC transporter domain. ATP is bound at residue G50–T57.

It belongs to the ABC transporter superfamily. Spermidine/putrescine importer (TC 3.A.1.11.1) family. In terms of assembly, the complex is composed of two ATP-binding proteins (PotA), two transmembrane proteins (PotB and PotC) and a solute-binding protein (PotD).

It localises to the cell inner membrane. It catalyses the reaction ATP + H2O + polyamine-[polyamine-binding protein]Side 1 = ADP + phosphate + polyamineSide 2 + [polyamine-binding protein]Side 1.. Functionally, part of the ABC transporter complex PotABCD involved in spermidine/putrescine import. Responsible for energy coupling to the transport system. The polypeptide is Spermidine/putrescine import ATP-binding protein PotA (Vibrio cholerae serotype O1 (strain ATCC 39315 / El Tor Inaba N16961)).